A 1255-amino-acid chain; its full sequence is Membrane-associated guanylate kinase, WW and PDZ domain-containing protein 1 (1255 aa).

The region spanning 17–105 (ECTVKRGPQG…AVTFKAVRQG (89 aa)) is the PDZ 1 domain. A Guanylate kinase-like domain is found at 96–287 (AVTFKAVRQG…APITDPSQKF (192 aa)). ATP is bound at residue 103 to 110 (RQGGRLNK). Disordered stretches follow at residues 208–227 (HSLQSGSKQSTPKRTKSYND) and 235–265 (HTENEEEEDVPEMNSSFTADSGDQDEPTLQE). In terms of domain architecture, WW 1 spans 300 to 333 (GPLPENWEMAYTENGEVYFIDHNAKTTSWLDPRC). Serine 357 is modified (phosphoserine). Residues 359-392 (LELPAGWEKIEDPVYGVYYVDHINRKTQYENPVL) enclose the WW 2 domain. The segment at 395–462 (KRKRQLEQQQ…QGKPFFTRNP (68 aa)) is disordered. The segment covering 402–414 (QQQQQQQHQQQPQ) has biased composition (low complexity). A compositionally biased stretch (pro residues) spans 434–444 (PVAPSHPPSNP). Residues 471–553 (HTKLRKSSRG…GASVDLELCR (83 aa)) enclose the PDZ 2 domain. Polar residues predominate over residues 585–601 (QETYDSPASHSSKTGKV). 2 disordered regions span residues 585-622 (QETYDSPASHSSKTGKVSNMKDARPSSPADVASNSSHG) and 719-820 (QRGG…GERD). Residues 642–720 (TVHIVKGPMG…GSEVTLLVQR (79 aa)) form the PDZ 3 domain. Phosphoserine occurs at positions 729 and 740. The segment covering 741–755 (QNSSQHSVSSLRSLH) has biased composition (low complexity). A Phosphoserine modification is found at serine 799. Residues 840 to 922 (DIFLWRKETG…QGHVNLTVRR (83 aa)) form the PDZ 4 domain. The segment at 932–984 (ENEVPSPASSHHSSNQPASLTEEKRTPQGSQNSLNTVSSGSGSTSGIGSGGGG) is disordered. Composition is skewed to polar residues over residues 938–950 (PASSHHSSNQPAS) and 958–967 (PQGSQNSLNT). Residues 974–984 (STSGIGSGGGG) are compositionally biased toward gly residues. A PDZ 5 domain is found at 997 to 1093 (DVEIRRGENE…TVTLRIIPGD (97 aa)). Serine 1070 carries the post-translational modification Phosphoserine. Over residues 1111–1129 (TTTHAPSQQGTQETRTTTK) the composition is skewed to polar residues. The disordered stretch occupies residues 1111-1142 (TTTHAPSQQGTQETRTTTKPKPDSQFEFKGPQ). One can recognise a PDZ 6 domain in the interval 1151 to 1233 (TVELERGAKG…RVRLFLRRGD (83 aa)).

In terms of assembly, part of a complex composed of AMOTL2, MAGI1 and CDH5, within the complex AMOTL2 acts as a scaffold protein for the interaction of MAGI1 with CDH5. The complex is required for coupling actin fibers to cell junctions in endothelial cells. Interacts through its WW 2 domain with SYNPO and through its PDZ 5 domain with ACTN4. Interacts with cytoplasmic domain of ADGRB1. Interacts via its WW domains with DRPLA. Interacts with ESAM, LRP2 and CXADR. May interact with CTNNB1. Interacts through its PDZ 1 domain with NET1. Interacts with ASIC3 and AMOT. Interacts with FCHSD2. Interacts with IGSF5/JAM4 and through its PDZ 2 and 3 domains with NPHS1 forming a tripartite complex. Interacts with DDN. May interact (via PDZ domain) with RAPGEF2. Interacts with DLL1. Interacts with KCNJ10 and possibly with KCNJ10/KCNJ16 heterodimer; this interaction may facilitate KCNJ10/KCNJ16 potassium channel expression at the basolateral membrane in kidney tubular cells. Interacts with PRRG4 (via cytoplasmic domain).

It is found in the cell junction. The protein localises to the tight junction. Its subcellular location is the cytoplasm. It localises to the membrane. Plays a role in coupling actin fibers to cell junctions in endothelial cells, via its interaction with AMOTL2 and CDH5. May regulate acid-induced ASIC3 currents by modulating its expression at the cell surface. The protein is Membrane-associated guanylate kinase, WW and PDZ domain-containing protein 1 (Magi1) of Rattus norvegicus (Rat).